Reading from the N-terminus, the 340-residue chain is S-adenosylmethionine:tRNA ribosyltransferase-isomerase (340 aa).

This sequence belongs to the QueA family. As to quaternary structure, monomer.

It is found in the cytoplasm. It catalyses the reaction 7-aminomethyl-7-carbaguanosine(34) in tRNA + S-adenosyl-L-methionine = epoxyqueuosine(34) in tRNA + adenine + L-methionine + 2 H(+). It participates in tRNA modification; tRNA-queuosine biosynthesis. Transfers and isomerizes the ribose moiety from AdoMet to the 7-aminomethyl group of 7-deazaguanine (preQ1-tRNA) to give epoxyqueuosine (oQ-tRNA). The chain is S-adenosylmethionine:tRNA ribosyltransferase-isomerase from Nitratiruptor sp. (strain SB155-2).